We begin with the raw amino-acid sequence, 256 residues long: NH(3)-dependent NAD(+) synthetase (256 aa).

Residue 29–36 (GISGGIDS) participates in ATP binding. Asp-35 contacts Mg(2+). Arg-115 contributes to the deamido-NAD(+) binding site. Thr-135 serves as a coordination point for ATP. Residue Glu-140 coordinates Mg(2+). Deamido-NAD(+) contacts are provided by Lys-148 and Asp-155. The ATP site is built by Lys-164 and Ser-186. A deamido-NAD(+)-binding site is contributed by 245-246 (HK).

Belongs to the NAD synthetase family. Homodimer.

It carries out the reaction deamido-NAD(+) + NH4(+) + ATP = AMP + diphosphate + NAD(+) + H(+). It functions in the pathway cofactor biosynthesis; NAD(+) biosynthesis; NAD(+) from deamido-NAD(+) (ammonia route): step 1/1. Catalyzes the ATP-dependent amidation of deamido-NAD to form NAD. Uses ammonia as a nitrogen source. This is NH(3)-dependent NAD(+) synthetase from Methanosarcina mazei (strain ATCC BAA-159 / DSM 3647 / Goe1 / Go1 / JCM 11833 / OCM 88) (Methanosarcina frisia).